The following is a 328-amino-acid chain: MKRPREPSGSDSESDGPIDVGREGELSQMARPLSTPSPSQMQARKKRRGIIEKRRRDRINSSLSELRRLVPTAFEKQGSSKLEKAEVLQMTVDHLKMLHATGGTGFFDARALAVDFRSIGFRECLTEVIRYLGVLEGPSSRADPVRIRLLSHLNSYAAEMEPSPTPPGPLAFPAWPWSFFHSCPGLSAPSNQLAILGRVPGPMLPNASSLAYPIPGLRAAPLRRAAGTILPARRNLLPSRGASSTRRARPLERPAAPLPAAPSGRATRGSHMAPLLRSPSPVSPGMVGSPAYMAVPAPRPSSPGLAGRPAGAMLCRSWVSEITEVGAF.

The interval 1–54 (MKRPREPSGSDSESDGPIDVGREGELSQMARPLSTPSPSQMQARKKRRGIIEKR) is disordered. Residues 42–111 (QARKKRRGII…GGTGFFDARA (70 aa)) are transcriptional repression and interaction with NCOR1 and SIN3A. Positions 43-98 (ARKKRRGIIEKRRRDRINSSLSELRRLVPTAFEKQGSSKLEKAEVLQMTVDHLKML) constitute a bHLH domain. Residues 116–153 (FRSIGFRECLTEVIRYLGVLEGPSSRADPVRIRLLSHL) form the Orange domain. The tract at residues 236–272 (LLPSRGASSTRRARPLERPAAPLPAAPSGRATRGSHM) is disordered.

Belongs to the HEY family. As to quaternary structure, self-associates. Interacts with GATA4, GATA6, HES1, HEY1 and HEY2. Interacts with HDAC1, NCOR1 and SIN3A.

It is found in the nucleus. In terms of biological role, downstream effector of Notch signaling which may be required for cardiovascular development. Transcriptional repressor which binds preferentially to the canonical E box sequence 5'-CACGTG-3'. Represses transcription by the cardiac transcriptional activators GATA4 and GATA6. In Bos taurus (Bovine), this protein is Hairy/enhancer-of-split related with YRPW motif-like protein (HEYL).